The following is a 399-amino-acid chain: tRNA-specific 2-thiouridylase MnmA (399 aa).

Residues 7 to 14 (AMSGGVDS) and Met33 contribute to the ATP site. The active-site Nucleophile is Cys128. Cys128 and Cys224 are oxidised to a cystine. Residue Gly152 participates in ATP binding. Residues 174–176 (KDQ) are interaction with tRNA. The Cysteine persulfide intermediate role is filled by Cys224. Residues 333–334 (RY) form an interaction with tRNA region.

The protein belongs to the MnmA/TRMU family.

Its subcellular location is the cytoplasm. It catalyses the reaction S-sulfanyl-L-cysteinyl-[protein] + uridine(34) in tRNA + AH2 + ATP = 2-thiouridine(34) in tRNA + L-cysteinyl-[protein] + A + AMP + diphosphate + H(+). Functionally, catalyzes the 2-thiolation of uridine at the wobble position (U34) of tRNA, leading to the formation of s(2)U34. The protein is tRNA-specific 2-thiouridylase MnmA of Rhodopirellula baltica (strain DSM 10527 / NCIMB 13988 / SH1).